The sequence spans 419 residues: Putative L-glutamine:3-amino-2,3-dideoxy-scyllo-inosose aminotransferase (419 aa).

An N6-(pyridoxal phosphate)lysine modification is found at Lys-199.

This sequence belongs to the DegT/DnrJ/EryC1 family. L-glutamine:2-deoxy-scyllo-inosose/scyllo-inosose aminotransferase subfamily. Pyridoxal 5'-phosphate serves as cofactor.

The enzyme catalyses 3-amino-2,3-dideoxy-scyllo-inosose + L-glutamine = 2-deoxystreptamine + 2-oxoglutaramate. Its pathway is metabolic intermediate biosynthesis; 2-deoxystreptamine biosynthesis; 2-deoxystreptamine from D-glucose 6-phosphate: step 4/4. It functions in the pathway antibiotic biosynthesis; kanamycin biosynthesis. In terms of biological role, catalyzes the transamination of 3-amino-2,3-dideoxy-scyllo-inosose (amino-DOI) into 2-deoxystreptamine (DOS). The chain is Putative L-glutamine:3-amino-2,3-dideoxy-scyllo-inosose aminotransferase (kanD) from Streptomyces kanamyceticus.